Here is a 349-residue protein sequence, read N- to C-terminus: Protein RecA (349 aa).

65 to 72 (GPESSGKT) provides a ligand contact to ATP.

Belongs to the RecA family.

The protein localises to the cytoplasm. In terms of biological role, can catalyze the hydrolysis of ATP in the presence of single-stranded DNA, the ATP-dependent uptake of single-stranded DNA by duplex DNA, and the ATP-dependent hybridization of homologous single-stranded DNAs. It interacts with LexA causing its activation and leading to its autocatalytic cleavage. This Aliarcobacter butzleri (strain RM4018) (Arcobacter butzleri) protein is Protein RecA.